The following is an 827-amino-acid chain: DNA ligase (827 aa).

NAD(+) contacts are provided by residues 45 to 49 (DAAYD), 94 to 95 (SL), and Glu-128. Lys-130 (N6-AMP-lysine intermediate) is an active-site residue. NAD(+) contacts are provided by Arg-151, Glu-188, Lys-304, and Lys-328. Zn(2+)-binding residues include Cys-451, Cys-454, Cys-475, and Cys-481. Residues 748–827 (AAAAAFSGRT…AEWLAMVEAA (80 aa)) enclose the BRCT domain.

It belongs to the NAD-dependent DNA ligase family. LigA subfamily. Mg(2+) serves as cofactor. The cofactor is Mn(2+).

The catalysed reaction is NAD(+) + (deoxyribonucleotide)n-3'-hydroxyl + 5'-phospho-(deoxyribonucleotide)m = (deoxyribonucleotide)n+m + AMP + beta-nicotinamide D-nucleotide.. In terms of biological role, DNA ligase that catalyzes the formation of phosphodiester linkages between 5'-phosphoryl and 3'-hydroxyl groups in double-stranded DNA using NAD as a coenzyme and as the energy source for the reaction. It is essential for DNA replication and repair of damaged DNA. This is DNA ligase from Methylobacterium sp. (strain 4-46).